A 335-amino-acid polypeptide reads, in one-letter code: Biotin synthase (335 aa).

A Radical SAM core domain is found at 47 to 276; sequence FYGKKVKLNM…SKEIRISGGR (230 aa). 3 residues coordinate [4Fe-4S] cluster: cysteine 65, cysteine 69, and cysteine 72. The [2Fe-2S] cluster site is built by cysteine 109, cysteine 141, cysteine 201, and arginine 271.

The protein belongs to the radical SAM superfamily. Biotin synthase family. In terms of assembly, homodimer. [4Fe-4S] cluster is required as a cofactor. It depends on [2Fe-2S] cluster as a cofactor.

It carries out the reaction (4R,5S)-dethiobiotin + (sulfur carrier)-SH + 2 reduced [2Fe-2S]-[ferredoxin] + 2 S-adenosyl-L-methionine = (sulfur carrier)-H + biotin + 2 5'-deoxyadenosine + 2 L-methionine + 2 oxidized [2Fe-2S]-[ferredoxin]. Its pathway is cofactor biosynthesis; biotin biosynthesis; biotin from 7,8-diaminononanoate: step 2/2. Functionally, catalyzes the conversion of dethiobiotin (DTB) to biotin by the insertion of a sulfur atom into dethiobiotin via a radical-based mechanism. This chain is Biotin synthase, found in Bacillus subtilis (strain 168).